We begin with the raw amino-acid sequence, 557 residues long: MISDNARSGMQQAPARSLFNALGFTAEEMKKPMIGIVSSYNEIVPGHMNIDKIVNAVKLGVAEAGGVPVVFPAIAVCDGIAMGHVGMKYSLVTRDLIADSTECMAIAHQFDGLVMVPNCDKNVPGLLMAAARLNLPTVFVSGGPMLAGHVKGKKRSLSSMFEAVGSYAAGTMTEEDVLEFEEKVCPTCGSCSGMYTANSMNCLTEALGMGLRGNGTIPAVYSERIKLAKHAGMAVMDMVNKGITARDIITKDSIMNALTVDMALGCSTNSMLHLPAIAHEIGFDFDIKFANPISEKTPNLCHLAPAGPTYMEDLNEAGGVYAVMKELADIGLLNTDCLTVSGKTIGECIATAYNRDPEVIRTVDNAYSKTGGLAVLSGNLAPDGSVVKRSAVVPEMLVHEGPARVFDSEEDAIAAIKGGKIVEGDVVVIRYEGPKGGPGMREMLNPTSAIAGMGLGSSVALITDGRFSGASRGASIGHVSPEAAVGGPIALVEEGDIISIDIPGLKLELKVSDEELAARKAKWQPREPKVTTGYLKRYASLVTSGNRGAILKSSADE.

D78 contacts Mg(2+). C119 lines the [2Fe-2S] cluster pocket. The Mg(2+) site is built by D120 and K121. N6-carboxylysine is present on K121. C191 is a [2Fe-2S] cluster binding site. Residue E442 coordinates Mg(2+). S468 (proton acceptor) is an active-site residue.

Belongs to the IlvD/Edd family. As to quaternary structure, homodimer. It depends on [2Fe-2S] cluster as a cofactor. Requires Mg(2+) as cofactor.

It carries out the reaction (2R)-2,3-dihydroxy-3-methylbutanoate = 3-methyl-2-oxobutanoate + H2O. The catalysed reaction is (2R,3R)-2,3-dihydroxy-3-methylpentanoate = (S)-3-methyl-2-oxopentanoate + H2O. It participates in amino-acid biosynthesis; L-isoleucine biosynthesis; L-isoleucine from 2-oxobutanoate: step 3/4. The protein operates within amino-acid biosynthesis; L-valine biosynthesis; L-valine from pyruvate: step 3/4. Functions in the biosynthesis of branched-chain amino acids. Catalyzes the dehydration of (2R,3R)-2,3-dihydroxy-3-methylpentanoate (2,3-dihydroxy-3-methylvalerate) into 2-oxo-3-methylpentanoate (2-oxo-3-methylvalerate) and of (2R)-2,3-dihydroxy-3-methylbutanoate (2,3-dihydroxyisovalerate) into 2-oxo-3-methylbutanoate (2-oxoisovalerate), the penultimate precursor to L-isoleucine and L-valine, respectively. This chain is Dihydroxy-acid dehydratase, found in Lachnospira eligens (strain ATCC 27750 / DSM 3376 / VPI C15-48 / C15-B4) (Eubacterium eligens).